The chain runs to 442 residues: Histidinol dehydrogenase (442 aa).

The disordered stretch occupies residues 1 to 20; sequence MLNVTDLRGQTPSKSDIRRA. NAD(+) contacts are provided by tyrosine 129, glutamine 193, and asparagine 218. Substrate contacts are provided by threonine 241, glutamine 263, and histidine 266. Residues glutamine 263 and histidine 266 each contribute to the Zn(2+) site. Active-site proton acceptor residues include glutamate 332 and histidine 333. Substrate contacts are provided by histidine 333, aspartate 366, glutamate 420, and histidine 425. Aspartate 366 contributes to the Zn(2+) binding site. Histidine 425 serves as a coordination point for Zn(2+).

Belongs to the histidinol dehydrogenase family. The cofactor is Zn(2+).

The enzyme catalyses L-histidinol + 2 NAD(+) + H2O = L-histidine + 2 NADH + 3 H(+). Its pathway is amino-acid biosynthesis; L-histidine biosynthesis; L-histidine from 5-phospho-alpha-D-ribose 1-diphosphate: step 9/9. In terms of biological role, catalyzes the sequential NAD-dependent oxidations of L-histidinol to L-histidinaldehyde and then to L-histidine. In Corynebacterium glutamicum (strain ATCC 13032 / DSM 20300 / JCM 1318 / BCRC 11384 / CCUG 27702 / LMG 3730 / NBRC 12168 / NCIMB 10025 / NRRL B-2784 / 534), this protein is Histidinol dehydrogenase.